A 644-amino-acid chain; its full sequence is Magnetosome protein MamZ (644 aa).

The major facilitator domain stretch occupies residues 1-427 (MPRNAEAPAK…YAAWLLANGI (427 aa)). Transmembrane regions (helical) follow at residues 22-42 (WNII…SISI), 63-83 (ADIQ…FGLL), 92-112 (IIAL…LSLQ), 113-133 (VGLA…VLLT), 159-179 (LMGN…AIVM), 185-205 (PGGV…GFQL), 254-274 (VIIL…LVGV), 281-301 (AHAA…VPLW), 311-331 (ISAI…LGMF), 337-357 (WLVA…FVTL), 369-389 (ILGA…VMLV), 403-423 (APFI…AWLL), 440-460 (TVDW…WLVG), 478-498 (VGFV…ISLA), 518-538 (IGLF…ALEW), 553-573 (PFIL…FTSA), 588-608 (LHSA…LAAN), and 612-629 (GEPY…WYRF). Residues 488-599 (WAFTFLIISL…SATYVINALV (112 aa)) form a ferric reductase-like domain region.

In the N-terminal section; belongs to the major facilitator superfamily.

Its subcellular location is the magnetosome membrane. Required for correct biomineralization of the magnetosome; probably converts and then transports some form of iron. It is partially functionally redundant with MamH. May function with MamX, MamY amd Mms6. In Paramagnetospirillum magneticum (strain ATCC 700264 / AMB-1) (Magnetospirillum magneticum), this protein is Magnetosome protein MamZ.